The primary structure comprises 447 residues: Cytochrome P450 monooxygenase aunB (447 aa).

Cys386 is a heme binding site.

It belongs to the cytochrome P450 family. The cofactor is heme.

It carries out the reaction 2 fonsecin B + NADPH + O2 + H(+) = aurasperone B + NADP(+) + 2 H2O. It catalyses the reaction 2 rubrofusarin B + NADPH + O2 + H(+) = aurasperone A + NADP(+) + 2 H2O. It participates in secondary metabolite biosynthesis. Its function is as follows. Cytochrome P450 monooxygenase; part of the gene cluster that mediates the biosynthesis of aurasperone B, a dimeric gamma-naphthopyrone. The first step in the biosynthesis of aurasperone B is the production of gamma-naphthopyrone precursor YWA1 by the non-reducing polyketide synthase albA, via condensation of one acetyl-CoA starter unit with 6 malonyl-CoA units. YWA1 is then methylated by aunE at position C-6 to yield foncesin which is further methylated at position C-8 by aunD to produce fonsecin B. A key enzyme in the biosynthetic pathway is the cytochrome P450 monooxygenase aunB which catalyzes the oxidative dimerization of fonsecin B to aurasperone B. AunB also catalyzes the oxidative dimerization of rubrofusarin B into aurasperone A. In Aspergillus niger (strain ATCC MYA-4892 / CBS 513.88 / FGSC A1513), this protein is Cytochrome P450 monooxygenase aunB.